A 484-amino-acid polypeptide reads, in one-letter code: Aspartyl/glutamyl-tRNA(Asn/Gln) amidotransferase subunit B (484 aa).

The protein belongs to the GatB/GatE family. GatB subfamily. In terms of assembly, heterotrimer of A, B and C subunits.

The enzyme catalyses L-glutamyl-tRNA(Gln) + L-glutamine + ATP + H2O = L-glutaminyl-tRNA(Gln) + L-glutamate + ADP + phosphate + H(+). It carries out the reaction L-aspartyl-tRNA(Asn) + L-glutamine + ATP + H2O = L-asparaginyl-tRNA(Asn) + L-glutamate + ADP + phosphate + 2 H(+). Allows the formation of correctly charged Asn-tRNA(Asn) or Gln-tRNA(Gln) through the transamidation of misacylated Asp-tRNA(Asn) or Glu-tRNA(Gln) in organisms which lack either or both of asparaginyl-tRNA or glutaminyl-tRNA synthetases. The reaction takes place in the presence of glutamine and ATP through an activated phospho-Asp-tRNA(Asn) or phospho-Glu-tRNA(Gln). The polypeptide is Aspartyl/glutamyl-tRNA(Asn/Gln) amidotransferase subunit B (Bordetella parapertussis (strain 12822 / ATCC BAA-587 / NCTC 13253)).